The primary structure comprises 78 residues: Large ribosomal subunit protein bL28 (78 aa).

Belongs to the bacterial ribosomal protein bL28 family.

The polypeptide is Large ribosomal subunit protein bL28 (Parasynechococcus marenigrum (strain WH8102)).